The primary structure comprises 549 residues: Chaperonin GroEL (549 aa).

ATP contacts are provided by residues 29–32 (TLGP), Lys-50, 86–90 (DGTTT), Gly-413, 479–481 (NAA), and Asp-496. The segment at 522-549 (VSDKPEKPQQGGQGGGGMGGGDMGGMDF) is disordered. The segment covering 532–549 (GGQGGGGMGGGDMGGMDF) has biased composition (gly residues).

Belongs to the chaperonin (HSP60) family. Forms a cylinder of 14 subunits composed of two heptameric rings stacked back-to-back. Interacts with the co-chaperonin GroES.

The protein localises to the cytoplasm. The catalysed reaction is ATP + H2O + a folded polypeptide = ADP + phosphate + an unfolded polypeptide.. Together with its co-chaperonin GroES, plays an essential role in assisting protein folding. The GroEL-GroES system forms a nano-cage that allows encapsulation of the non-native substrate proteins and provides a physical environment optimized to promote and accelerate protein folding. The sequence is that of Chaperonin GroEL from Deinococcus deserti (strain DSM 17065 / CIP 109153 / LMG 22923 / VCD115).